The sequence spans 412 residues: Cysteate synthase (412 aa).

Lys105 carries the post-translational modification N6-(pyridoxal phosphate)lysine. Pyridoxal 5'-phosphate contacts are provided by Asn131 and Thr382.

It belongs to the threonine synthase family. Cysteate synthase subfamily. In terms of assembly, homotrimer. Requires pyridoxal 5'-phosphate as cofactor.

The catalysed reaction is O-phospho-L-serine + sulfite + H(+) = L-cysteate + phosphate. It functions in the pathway cofactor biosynthesis; coenzyme M biosynthesis. Functionally, specifically catalyzes the beta-elimination of phosphate from L-phosphoserine and the beta-addition of sulfite to the dehydroalanine intermediate to produce L-cysteate. The chain is Cysteate synthase from Methanocorpusculum labreanum (strain ATCC 43576 / DSM 4855 / Z).